Consider the following 337-residue polypeptide: CMRF35-like molecule 1 (337 aa).

A signal peptide spans M1 to A19. The region spanning E20–N125 is the Ig-like V-type domain. Topologically, residues E20–S193 are extracellular. Residues V39 to S45 are plays an important role in murine norovirus (MNV) binding. 2 disulfide bridges follow: C41-C109 and C55-C63. Residues V194–A214 traverse the membrane as a helical segment. The Cytoplasmic segment spans residues W215–P337. 2 disordered regions span residues Q248–H270 and L318–P337. Over residues S252–S266 the composition is skewed to low complexity.

Belongs to the CD300 family. In terms of assembly, interacts with PTPN6/SHP-1 in a tyrosine phosphorylation dependent manner. Interacts with IL4R. In terms of processing, phosphorylated on tyrosine. In terms of tissue distribution, expressed in myeloid cells. Present on the surface of macrophages (at protein level). Highly expressed by alveolar, splenic macrophages and bone marrow-derived dendritic cells. Expression is increased following aeroallergen challenge in macrophages, mast cells, and eosinophils.

The protein localises to the cell membrane. Functionally, acts as an inhibitory receptor for myeloid cells and mast cells. Positively regulates the phagocytosis of apoptotic cells (efferocytosis) via phosphatidylserine (PS) recognition; recognizes and binds PS as a ligand which is expressed on the surface of apoptotic cells. Plays an important role in the maintenance of immune homeostasis, by promoting macrophage-mediated efferocytosis and by inhibiting dendritic cell-mediated efferocytosis. Negatively regulates Fc epsilon receptor-dependent mast cell activation and allergic responses via binding to ceramide which acts as a ligand. May act as a coreceptor for interleukin 4 (IL-4). Associates with and regulates IL-4 receptor alpha-mediated responses by augmenting IL-4- and IL-13-induced signaling. Negatively regulates the Toll-like receptor (TLR) signaling mediated by MYD88 and TRIF through activation of PTPN6/SHP-1 and PTPN11/SHP-2. Inhibits osteoclast formation. Induces macrophage cell death upon engagement. (Microbial infection) Acts as a functional receptor for murine norovirus (MNV). Mediates binding to the cell surface and is both necessary and sufficient for viral entry and replication. This interaction requires Mg(2+) and Ca(2+) and is enhanced by bile acids. Primary determinant of MNV species tropism and is sufficient to render cells permissive to infection by MNV. Can render nonmurine mammalian cells susceptible to MNV infection. This Mus musculus (Mouse) protein is CMRF35-like molecule 1 (Cd300lf).